Here is a 158-residue protein sequence, read N- to C-terminus: Transcription elongation factor GreA (158 aa).

This sequence belongs to the GreA/GreB family.

Functionally, necessary for efficient RNA polymerase transcription elongation past template-encoded arresting sites. The arresting sites in DNA have the property of trapping a certain fraction of elongating RNA polymerases that pass through, resulting in locked ternary complexes. Cleavage of the nascent transcript by cleavage factors such as GreA or GreB allows the resumption of elongation from the new 3'terminus. GreA releases sequences of 2 to 3 nucleotides. In Rhizobium etli (strain CIAT 652), this protein is Transcription elongation factor GreA.